Here is a 401-residue protein sequence, read N- to C-terminus: Aspartate aminotransferase, mitochondrial (401 aa).

Thr19 bears the Phosphothreonine mark. N6-acetyllysine is present on Lys30. A substrate-binding site is contributed by Gly36. N6-acetyllysine; alternate is present on Lys44. An N6-succinyllysine; alternate modification is found at Lys44. Lys53 carries the post-translational modification N6-acetyllysine. Lys61 is subject to N6-acetyllysine; alternate. The residue at position 61 (Lys61) is an N6-succinyllysine; alternate. At Tyr67 the chain carries 3'-nitrotyrosine; alternate. At Tyr67 the chain carries Phosphotyrosine; alternate. Lys78, Lys93, and Lys130 each carry N6-acetyllysine; alternate. Residues Lys78, Lys93, and Lys130 each carry the N6-succinyllysine; alternate modification. Substrate is bound at residue Trp133. N6-acetyllysine; alternate is present on Lys156. Residue Lys156 is modified to N6-succinyllysine; alternate. Asn186 is a binding site for substrate. Residue Lys198 is modified to N6-succinyllysine. The residue at position 205 (Lys205) is an N6-acetyllysine. N6-acetyllysine; alternate is present on residues Lys250 and Lys267. Lys250 is modified (N6-(pyridoxal phosphate)lysine; alternate). The residue at position 267 (Lys267) is an N6-succinyllysine; alternate. Lys273 carries the post-translational modification N6-acetyllysine. Lys280 carries the post-translational modification N6-acetyllysine; alternate. Lys280 is subject to N6-succinyllysine; alternate. The residue at position 284 (Arg284) is an Asymmetric dimethylarginine. Lys309 is modified (N6-acetyllysine; alternate). Position 309 is an N6-succinyllysine; alternate (Lys309). Residue Lys316 is modified to N6-acetyllysine. Lys334 is subject to N6-acetyllysine; alternate. An N6-succinyllysine; alternate modification is found at Lys334. Lys335 and Lys358 each carry N6-acetyllysine. An N6-acetyllysine; alternate mark is found at Lys367 and Lys375. Lys367 and Lys375 each carry N6-succinyllysine; alternate. Arg378 lines the substrate pocket.

Belongs to the class-I pyridoxal-phosphate-dependent aminotransferase family. In terms of assembly, homodimer. Requires pyridoxal 5'-phosphate as cofactor.

The protein localises to the mitochondrion matrix. Its subcellular location is the cell membrane. The enzyme catalyses L-aspartate + 2-oxoglutarate = oxaloacetate + L-glutamate. It carries out the reaction L-kynurenine + 2-oxoglutarate = kynurenate + L-glutamate + H2O. Functionally, catalyzes the irreversible transamination of the L-tryptophan metabolite L-kynurenine to form kynurenic acid (KA). As a member of the malate-aspartate shuttle, it has a key role in the intracellular NAD(H) redox balance. Is important for metabolite exchange between mitochondria and cytosol, and for amino acid metabolism. Facilitates cellular uptake of long-chain free fatty acids. The sequence is that of Aspartate aminotransferase, mitochondrial (GOT2) from Equus caballus (Horse).